A 429-amino-acid chain; its full sequence is Fc receptor-like protein 1 (429 aa).

Positions 1 to 16 (MLPRLLLLICAPLCEP) are cleaved as a signal peptide. Ig-like C2-type domains follow at residues 17–104 (AELF…SQIN), 109–200 (PVAD…VSIT), and 208–291 (PILM…EAVT). Over 17–307 (AELFLIASPS…TGARSNHLTS (291 aa)) the chain is Extracellular. Intrachain disulfides connect cysteine 38-cysteine 86, cysteine 134-cysteine 183, and cysteine 229-cysteine 276. Asparagine 293 carries N-linked (GlcNAc...) asparagine glycosylation. The helical transmembrane segment at 308–328 (GVIEGLLSTLGPATVALLFCY) threads the bilayer. At 329–429 (GLKRKIGRRS…ITDVDYEDAM (101 aa)) the chain is on the cytoplasmic side. 5 consecutive short sequence motifs (ITIM motif) follow at residues 354-359 (FTYLNS), 367-372 (PIYENV), 379-384 (EVYSLA), 410-415 (DIYSRL), and 423-428 (VDYEDA).

As to quaternary structure, interacts with ABL1. Interacts with GRB2 and SOS1. Interacts with SHIP-1/INPP5D. Post-translationally, phosphorylated on tyrosines upon activation. As to expression, primarily expressed in secondary lymphoid tissues by mature subsets of B-cells. Detected in spleen, lymph node, heart, skeletal muscle, kidney, liver and placenta. Specifically expressed by mature B lineage cells with higher expression in naive versus memory B-cells (at protein level).

It localises to the cell membrane. In terms of biological role, type I transmembrane surface glycoprotein preferentially expressed by B-cells that regulates BCR-mediated signaling responses. Recruits ABL1 as the intracellular effector molecule to enhance B-cell activation. Also plays a negative role by suppressing ERK activation under homeostatic and BCR-stimulated conditions in a GRB2-dependent manner. The protein is Fc receptor-like protein 1 (FCRL1) of Homo sapiens (Human).